The following is a 452-amino-acid chain: Nebulette (452 aa).

Positions Met1–Ala26 are disordered. Residues Glu11–Asn23 show a composition bias toward acidic residues. 12 Nebulin repeats span residues Ser29–Asp63, Lys64–Ser98, Leu101–Gly135, Asp138–Thr172, Tyr173–Lys199, Lys206–Lys240, Leu263–Gly278, Leu279–Gly313, Ser315–Lys349, Ser352–Lys386, Gly389–Lys423, and Gly426–Val452.

Interacts (via nebulin repeats 1-5) with DESM (via rod region). Interacts (via SH3 domain) with XIRP2.

Its subcellular location is the cytoplasm. In terms of biological role, binds to actin and plays an important role in the assembly of the Z-disk. May functionally link sarcomeric actin to the desmin intermediate filaments in the heart muscle sarcomeres. Isoform 2 might play a role in the assembly of focal adhesion. The polypeptide is Nebulette (Nebl) (Mus musculus (Mouse)).